Consider the following 59-residue polypeptide: Gonadotropin-releasing hormone receptor (59 aa).

Topologically, residues 1 to 2 (VA) are cytoplasmic. Residues 3 to 23 (FATSFTVCWTPYYVLGIWYWF) form a helical membrane-spanning segment. Residues 24-37 (DPEMLNRVSDPVNH) are Extracellular-facing. The helical transmembrane segment at 38-58 (FFFLFAFLNPCFDPLIYGYFS) threads the bilayer. A topological domain (cytoplasmic) is located at residue Leu59.

Belongs to the G-protein coupled receptor 1 family.

It localises to the cell membrane. In terms of biological role, receptor for gonadotropin releasing hormone (GnRH) that mediates the action of GnRH to stimulate the secretion of the gonadotropic hormones luteinizing hormone (LH) and follicle-stimulating hormone (FSH). This receptor mediates its action by association with G-proteins that activate a phosphatidylinositol-calcium second messenger system. This is Gonadotropin-releasing hormone receptor (GNRHR) from Macaca mulatta (Rhesus macaque).